We begin with the raw amino-acid sequence, 233 residues long: 5-demethoxyubiquinone hydroxylase, mitochondrial (233 aa).

A mitochondrion-targeting transit peptide spans 1–15 (MLSRVSVFKPASRGF). Ser-20 and Ser-28 each carry phosphoserine. Thr-32 bears the Phosphothreonine mark. Glu-63, Glu-95, His-98, Glu-147, Glu-194, and His-197 together coordinate Fe cation.

Belongs to the COQ7 family. Component of a multi-subunit COQ enzyme complex, composed of at least COQ3, COQ4, COQ5, COQ6, COQ7 and COQ9. Fe cation is required as a cofactor. Post-translationally, phosphorylated. Dephosphorylated by PTC7; dephosphorylation is essential for enzyme activation.

Its subcellular location is the mitochondrion inner membrane. The enzyme catalyses a 5-methoxy-2-methyl-3-(all-trans-polyprenyl)benzene-1,4-diol + AH2 + O2 = a 3-demethylubiquinol + A + H2O. It catalyses the reaction a 5-methoxy-2-methyl-3-(all-trans-polyprenyl)benzoquinone + NADH + O2 = a 3-demethylubiquinone + NAD(+) + H2O. Its pathway is cofactor biosynthesis; ubiquinone biosynthesis. Its activity is regulated as follows. Dephosphorylation by PTC7 leads to activation. In terms of biological role, catalyzes the hydroxylation of 2-hexaprenyl-3-methyl-6-methoxy-1,4-benzoquinol (DMQH2) during ubiquinone biosynthesis. Also catalyzes the hydroxylation of the 5-methoxy-2-methyl-3-(all-trans-polyprenyl)benzoquinone at the C6 position and participates in the biosynthesis of ubiquinone. Also has a structural role in the COQ enzyme complex, stabilizing COQ3 and COQ4 polypeptides. This Saccharomyces cerevisiae (strain ATCC 204508 / S288c) (Baker's yeast) protein is 5-demethoxyubiquinone hydroxylase, mitochondrial.